A 313-amino-acid chain; its full sequence is Sorting nexin-20 (313 aa).

The interval 1 to 61 (MASPQHPGGP…MTTRELQEHW (61 aa)) is disordered. A Phosphoserine modification is found at serine 3. The span at 29–38 (PPGPDLPCPG) shows a compositional bias: pro residues. Residues 45–55 (GPTSNSNMTTR) are compositionally biased toward polar residues. The PX domain maps to 71–188 (VRLLFEIASA…DFLTRPELCE (118 aa)). Residues arginine 113, serine 115, lysine 140, and arginine 154 each coordinate a 1,2-diacyl-sn-glycero-3-phospho-(1D-myo-inositol-3-phosphate).

It belongs to the sorting nexin family. As to quaternary structure, interacts with SELPLG. Interaction with SELPLG is controversial.

The protein localises to the early endosome membrane. It localises to the cell membrane. Its subcellular location is the cytoplasm. The protein resides in the nucleus. Functionally, may play a role in cellular vesicle trafficking. Has been proposed to function as a sorting protein that targets SELPLG into endosomes, but has no effect on SELPLG internalization from the cell surface, or on SELPLG-mediated cell-cell adhesion. The chain is Sorting nexin-20 (Snx20) from Rattus norvegicus (Rat).